Here is a 2060-residue protein sequence, read N- to C-terminus: Fatty acid synthase subunit beta (2060 aa).

The interval 1-32 (MFPGDMESKASSMNGDQPSSPTPSSSTSVTIP) is disordered. The segment covering 18–32 (PSSPTPSSSTSVTIP) has biased composition (low complexity). The tract at residues 182–543 (VYVIFGGQGN…KAGQGVRVIH (362 aa)) is acetyltransferase (AT) domain. Catalysis depends on serine 301, which acts as the For acetyltransferase activity. The interval 600–845 (TRLFLQPPIM…LIVATEGAPD (246 aa)) is enoyl reductase (ER) domain. Residues 1157 to 1640 (DKNLNWAKAL…CTGDRLAVSM (484 aa)) form a dehydratase (DH) domain region. In terms of domain architecture, MaoC-like spans 1549–1661 (FEEQEISFTA…VEVQIHKNMA (113 aa)). The segment at 1679–2043 (LVFTGQGSQK…FNEVLRLTGS (365 aa)) is malonyl/palmitoyl transferase (MT/PT) domain. The For malonyltransferase activity role is filled by serine 1824.

The protein belongs to the fungal fatty acid synthetase subunit beta family. [Alpha(6)beta(6)] hexamers of two multifunctional subunits (alpha and beta).

The enzyme catalyses acetyl-CoA + n malonyl-CoA + 2n NADPH + 4n H(+) = a long-chain-acyl-CoA + n CoA + n CO2 + 2n NADP(+).. It catalyses the reaction holo-[ACP] + acetyl-CoA = acetyl-[ACP] + CoA. The catalysed reaction is holo-[ACP] + malonyl-CoA = malonyl-[ACP] + CoA. It carries out the reaction a (3R)-hydroxyacyl-[ACP] = a (2E)-enoyl-[ACP] + H2O. The enzyme catalyses a 2,3-saturated acyl-[ACP] + NAD(+) = a (2E)-enoyl-[ACP] + NADH + H(+). It catalyses the reaction (9Z)-octadecenoyl-[ACP] + H2O = (9Z)-octadecenoate + holo-[ACP] + H(+). The protein operates within mycotoxin biosynthesis. In terms of biological role, fatty acid synthase subunit beta; part of the gene cluster that mediates the biosynthesis of gramillins A and B, bicyclic lipopeptides that induce cell death in maize leaves but not in wheat leaves. The nonribosomal peptide synthetase GRA1 incorporates respectively a glutamic adic (Glu), a leucine (Leu), a serine (Ser), a hydroxyglutamine (HOGln), a 2-amino decanoic acid, and 2 cysteins (CysB and CysA). The biosynthesis of 2-amino decanoic acid incorporated in gramillins could be initiated by a fatty acid synthase composed of the alpha and beta subunits FGSG_00036 and FGSG_11656. The cytochrome P450 monooxygenase FGSG_15680 could hydroxylate the fatty acid chain. Subsequent oxidation to the ketone by the oxidoreductase FGSG_00048 and transamination by aminotransferase FGSG_00049 could form 2-amino-decanoic acid. On the other hand, FGSG_15680 could also be responsible for the HO-modified glutamine at the gamma-position. Whether hydroxylation occurs on the fully assembled product or on the Gln residue prior to assembly into the gramillins requires further proof. The thioredoxin FGSG_00043 could also be required for the disulfide-bond formation between CysA and CysB. The specific involvement of the remaining proteins from the cluster is more difficult to discern, but could have broader regulatory (FGSG_00040 and FGSG_11657) or enzymatic functions (FGSG_00044 and FGSG_00045). The final C-domain of GRA1 does not possess the expected sequence of a termination CT domain, often implicated in macrocyclization and release of a cyclopeptidein fungal NRPs; and the thioesterase FGSG_00047 may act in concert with the terminal C-domain of GRA1 to catalyze the formation of the macrocyclic anhydride and release of the products. This Gibberella zeae (strain ATCC MYA-4620 / CBS 123657 / FGSC 9075 / NRRL 31084 / PH-1) (Wheat head blight fungus) protein is Fatty acid synthase subunit beta.